Consider the following 286-residue polypeptide: Formamidopyrimidine-DNA glycosylase (286 aa).

Residue Pro2 is the Schiff-base intermediate with DNA of the active site. Catalysis depends on Glu3, which acts as the Proton donor. Lys61 serves as the catalytic Proton donor; for beta-elimination activity. 3 residues coordinate DNA: His103, Arg122, and Arg164. The segment at 250–284 adopts an FPG-type zinc-finger fold; it reads NAYGQTGEPCGRCGTQIVRENFMNRGSHYCPNCQK. Arg274 (proton donor; for delta-elimination activity) is an active-site residue.

This sequence belongs to the FPG family. As to quaternary structure, monomer. Zn(2+) serves as cofactor.

It carries out the reaction Hydrolysis of DNA containing ring-opened 7-methylguanine residues, releasing 2,6-diamino-4-hydroxy-5-(N-methyl)formamidopyrimidine.. It catalyses the reaction 2'-deoxyribonucleotide-(2'-deoxyribose 5'-phosphate)-2'-deoxyribonucleotide-DNA = a 3'-end 2'-deoxyribonucleotide-(2,3-dehydro-2,3-deoxyribose 5'-phosphate)-DNA + a 5'-end 5'-phospho-2'-deoxyribonucleoside-DNA + H(+). In terms of biological role, involved in base excision repair of DNA damaged by oxidation or by mutagenic agents. Acts as a DNA glycosylase that recognizes and removes damaged bases. Has a preference for oxidized purines, such as 7,8-dihydro-8-oxoguanine (8-oxoG). Has AP (apurinic/apyrimidinic) lyase activity and introduces nicks in the DNA strand. Cleaves the DNA backbone by beta-delta elimination to generate a single-strand break at the site of the removed base with both 3'- and 5'-phosphates. This chain is Formamidopyrimidine-DNA glycosylase, found in Corynebacterium glutamicum (strain R).